A 296-amino-acid polypeptide reads, in one-letter code: Cytidine deaminase (296 aa).

CMP/dCMP-type deaminase domains lie at 47-167 and 186-296; these read EESE…FGPS and DSSD…IDPA. Residue 88 to 90 participates in substrate binding; it reads NLE. A Zn(2+)-binding site is contributed by His-101. Glu-103 acts as the Proton donor in catalysis. Cys-128 and Cys-131 together coordinate Zn(2+).

The protein belongs to the cytidine and deoxycytidylate deaminase family. In terms of assembly, homodimer. It depends on Zn(2+) as a cofactor.

It catalyses the reaction cytidine + H2O + H(+) = uridine + NH4(+). The enzyme catalyses 2'-deoxycytidine + H2O + H(+) = 2'-deoxyuridine + NH4(+). This enzyme scavenges exogenous and endogenous cytidine and 2'-deoxycytidine for UMP synthesis. The sequence is that of Cytidine deaminase from Shewanella woodyi (strain ATCC 51908 / MS32).